Consider the following 1286-residue polypeptide: CLIP-associating protein 2 (1286 aa).

The segment at 1–40 (MRRLICKRICDYKSFDDEESVDGNRPSSAASAFKVPAPKT) is golgi localization. Residues Ser-14 and Ser-20 each carry the phosphoserine modification. Residues 17–70 (DEESVDGNRPSSAASAFKVPAPKTPGNPVNSARKPGSAGGPKAGGTSKEGGAGA) are disordered. Positions 53-69 (SAGGPKAGGTSKEGGAG) are enriched in gly residues. The tract at residues 66–317 (GGAGAVDEDD…KSLQTYLKSS (252 aa)) is TOG 1. HEAT repeat units lie at residues 179-214 (HGAEAIVPTLFNLVPNSAKVMATSGCAAIRFIIRHT), 215-251 (HVPRLIPLITSNCTSKSVPVRRRSFEFLDLLLQEWQT), and 256-293 (RHAAVLVETIKKGIHDADAEARVEARKTYMGLRNHFPG). Disordered regions lie at residues 320–350 (VASLPQSDRSSSSSQESLNRPFSSKWSTANP) and 355–374 (GRVSVGGSKASPLPGSLQRS). Ser-322, Ser-333, and Ser-336 each carry phosphoserine. A compositionally biased stretch (low complexity) spans 322 to 340 (SLPQSDRSSSSSQESLNRP). Over residues 341–350 (FSSKWSTANP) the composition is skewed to polar residues. Ser-374, Ser-376, and Ser-413 each carry phosphoserine. The tract at residues 410-473 (SYASLEDTSD…GSRSGSPGRV (64 aa)) is disordered. Residues 417–431 (TSDKMDGTASEDGRV) are compositionally biased toward basic and acidic residues. The tract at residues 450 to 565 (RGRSRTKMVS…GPGYGMSQSS (116 aa)) is interaction with microtubules, MAPRE1 and MAPRE3. Positions 459-473 (SQSQPGSRSGSPGRV) are enriched in low complexity. Phosphoserine occurs at positions 461, 465, 469, 484, and 495. The interval 492–566 (NSASAQKRSK…PGYGMSQSSR (75 aa)) is disordered. Positions 500 to 503 (SKIP) match the SXIP motif 1; mediates interaction with MAPRE1 and targeting to microtubule plus ends motif. Ser-513 bears the Phosphoserine mark. An SXIP motif 2; mediates interaction with MAPRE1 and targeting to microtubule plus ends motif is present at residues 523–526 (SRIP). A phosphoserine mark is found at Ser-531, Ser-535, Ser-570, Ser-572, Ser-581, Ser-614, and Ser-620. The segment covering 606–616 (RYESYGMHSDD) has biased composition (basic and acidic residues). A disordered region spans residues 606–638 (RYESYGMHSDDDANSDASSACSERSYSSRNGSI). Residues 620 to 634 (SDASSACSERSYSSR) show a composition bias toward low complexity. Positions 642–873 (MRQTEDVAEV…TKLLHNHLRN (232 aa)) are TOG 2. 2 HEAT repeats span residues 702–739 (KVFSMFLETLVDFIQVHKDDLQDWLFVLLTQLLKKMGA) and 764–801 (LQFNILMRFTVDQTQTPSLKVKVAILKYIETLAKQMDP). At Thr-779 the chain carries Phosphothreonine. The segment at 864 to 1286 (TKLLHNHLRN…DPTTDVSGQS (423 aa)) is interaction with RSN and localization to the Golgi and kinetochores. 2 disordered regions span residues 870–920 (HLRN…FDYD) and 944–990 (SFRS…QPAL). 2 stretches are compositionally biased toward polar residues: residues 872–884 (RNTGNGTQSSMGS) and 893–914 (SPANWSSPLTSPTNTSQNTLSP). Position 884 is a phosphoserine (Ser-884). 4 positions are modified to phosphoserine: Ser-944, Ser-947, Ser-1005, and Ser-1021. The span at 947–964 (SQEDMSEPLKRDPKKEDG) shows a compositional bias: basic and acidic residues. The segment at 1009–1286 (RDYNPYNYSD…DPTTDVSGQS (278 aa)) is required for cortical localization. HEAT repeat units follow at residues 1046–1083 (LDHSDLVAELLKELSNHNERIEERKIALYELMKLTQEE), 1090–1127 (EHFKTILLLLLETLGDKEPTIRALALKVLKEILRHQPA), and 1208–1245 (LLLPEIMPGLIQGYDNSESSVRKACVFCLVAVHAVIGD).

This sequence belongs to the CLASP family. Interacts with microtubules. Interacts with MAPRE1; probably required for targeting to the growing microtubule plus ends. Interacts with CLIP2, ERC1, MAPRE3, PHLDB2 and RSN. The interaction with ERC1 may be mediated by PHLDB2. Interacts with GCC2; recruits CLASP2 to Golgi membranes. Interacts with MACF1. Interacts with SOGA1 and MTCL1. Phosphorylated by GSK3B. Phosphorylation by GSK3B may negatively regulate binding to microtubule lattices in lamella.

The protein localises to the cytoplasm. It is found in the cytoskeleton. Its subcellular location is the microtubule organizing center. The protein resides in the centrosome. It localises to the chromosome. The protein localises to the centromere. It is found in the kinetochore. Its subcellular location is the spindle. The protein resides in the golgi apparatus. It localises to the trans-Golgi network. The protein localises to the cell membrane. It is found in the cell projection. Its subcellular location is the ruffle membrane. The protein resides in the cell cortex. Microtubule plus-end tracking protein that promotes the stabilization of dynamic microtubules. Involved in the nucleation of noncentrosomal microtubules originating from the trans-Golgi network (TGN). Required for the polarization of the cytoplasmic microtubule arrays in migrating cells towards the leading edge of the cell. May act at the cell cortex to enhance the frequency of rescue of depolymerizing microtubules by attaching their plus-ends to cortical platforms composed of ERC1 and PHLDB2. This cortical microtubule stabilizing activity is regulated at least in part by phosphatidylinositol 3-kinase signaling. Also performs a similar stabilizing function at the kinetochore which is essential for the bipolar alignment of chromosomes on the mitotic spindle. Acts as a mediator of ERBB2-dependent stabilization of microtubules at the cell cortex. The sequence is that of CLIP-associating protein 2 (Clasp2) from Rattus norvegicus (Rat).